The following is a 337-amino-acid chain: D-alanine--D-alanine ligase (337 aa).

Residues 124–330 (KMWFSALGIP…FTEYLSLVIN (207 aa)) enclose the ATP-grasp domain. 154 to 209 (ALANWGSIFIKAASQGSSVGCYKVDDSSKVAQVLKDAFGYAPYVVVEKTIKARELE) contacts ATP. Mg(2+)-binding residues include aspartate 284, glutamate 297, and asparagine 299.

The protein belongs to the D-alanine--D-alanine ligase family. Mg(2+) is required as a cofactor. The cofactor is Mn(2+).

The protein resides in the cytoplasm. The catalysed reaction is 2 D-alanine + ATP = D-alanyl-D-alanine + ADP + phosphate + H(+). Its pathway is cell wall biogenesis; peptidoglycan biosynthesis. Functionally, cell wall formation. The chain is D-alanine--D-alanine ligase from Shewanella putrefaciens (strain CN-32 / ATCC BAA-453).